Reading from the N-terminus, the 785-residue chain is Neutral ceramidase (785 aa).

Residues 1–35 form the signal peptide; sequence MEASSWLCYQARGFGSSRVWLWLLLALVLLNCSLV. A glycan (N-linked (GlcNAc...) asparagine) is linked at asparagine 31. Residue serine 359 is the Nucleophile of the active site. 3 N-linked (GlcNAc...) asparagine glycosylation sites follow: asparagine 377, asparagine 675, and asparagine 685.

The protein belongs to the neutral ceramidase family. In terms of tissue distribution, expressed in seedlings, with higher levels in roots than in shoots.

Its subcellular location is the secreted. The protein resides in the endoplasmic reticulum. It localises to the golgi apparatus. The catalysed reaction is an N-acylsphing-4-enine + H2O = sphing-4-enine + a fatty acid. Its activity is regulated as follows. Enhanced activity in the presence of calcium, magnesium, manganese and zinc ions, but inhibited activity in the presence of iron ion. In terms of biological role, hydrolyzes the sphingolipid ceramide into sphingosine and free fatty acid. Uses ceramide instead of phytoceramide as substrate. The protein is Neutral ceramidase of Oryza sativa subsp. japonica (Rice).